The primary structure comprises 361 residues: Probable purine permease 13 (361 aa).

A run of 10 helical transmembrane segments spans residues 35–55 (WILVFISIFFLISAQAIAVLL), 68–88 (WISTLVQTCGFPILYLPLCFL), 103–123 (LVWIYLSLGFAIGLDNLLYSF), 129–151 (SASTYSILCSSQLAFNGVFSYYI), 156–176 (ITCLILFSVLFLSVSAVLVSL), 192–212 (LIGCLCTVFASLIYSLQLSLM), 238–258 (VASCVAVIGLFASGEWMLLSV), 268–288 (VIYVLTLVGTAVSWQLGSVGA), 289–309 (VALIFLVSSLFSNLIGTLSLI), and 323–343 (LTEVKMVAMLIAFMGFGFYIY).

Belongs to the purine permeases (TC 2.A.7.14) family.

The protein localises to the membrane. In Arabidopsis thaliana (Mouse-ear cress), this protein is Probable purine permease 13 (PUP13).